We begin with the raw amino-acid sequence, 229 residues long: Secretory carrier-associated membrane protein 4 (229 aa).

The Cytoplasmic portion of the chain corresponds to 1–39 (MSEKENNFPPLPKFIPVKPCFYQNFSDEIPVEHQVLVKR). A run of 4 helical transmembrane segments spans residues 40-60 (IYRL…ACLA), 61-81 (WWIG…LLLF), 105-125 (FMAF…QAIG), and 149-169 (VVML…AIAI). Over 170-229 (MKVHRIYRGAGGSFQKAQTEWNTGTWRNPPSREAQYNNFSGNSLPEYPTVPSYPGSGQWP) the chain is Cytoplasmic. The residue at position 194 (threonine 194) is a Phosphothreonine. A disordered region spans residues 208 to 229 (FSGNSLPEYPTVPSYPGSGQWP).

The protein belongs to the SCAMP family.

It is found in the membrane. Its function is as follows. Probably involved in membrane protein trafficking. The sequence is that of Secretory carrier-associated membrane protein 4 (SCAMP4) from Homo sapiens (Human).